We begin with the raw amino-acid sequence, 445 residues long: Phosphoglucosamine mutase (445 aa).

The Phosphoserine intermediate role is filled by S102. Residues S102, D241, D243, and D245 each coordinate Mg(2+). S102 bears the Phosphoserine mark.

It belongs to the phosphohexose mutase family. Requires Mg(2+) as cofactor. Activated by phosphorylation.

It catalyses the reaction alpha-D-glucosamine 1-phosphate = D-glucosamine 6-phosphate. In terms of biological role, catalyzes the conversion of glucosamine-6-phosphate to glucosamine-1-phosphate. The sequence is that of Phosphoglucosamine mutase from Pectobacterium atrosepticum (strain SCRI 1043 / ATCC BAA-672) (Erwinia carotovora subsp. atroseptica).